Consider the following 314-residue polypeptide: Coiled-coil domain-containing protein 69 (314 aa).

Residues 1-12 (MGCHNSKVCGQV) are compositionally biased toward low complexity. Disordered stretches follow at residues 1–43 (MGCH…HSSE) and 114–133 (RSVS…LHSE). A lipid anchor (N-myristoyl glycine) is attached at G2. Basic and acidic residues-rich tracts occupy residues 20 to 43 (KAQE…HSSE) and 120 to 133 (HQSE…LHSE). Residues 106-291 (NDLHEQQMRS…QEKEELLFKL (186 aa)) adopt a coiled-coil conformation.

The protein belongs to the CCDC69 family.

The protein resides in the cytoplasm. It is found in the cytoskeleton. The protein localises to the spindle. It localises to the midbody. Its function is as follows. May act as a scaffold to regulate the recruitment and assembly of spindle midzone components. The sequence is that of Coiled-coil domain-containing protein 69 (ccdc69) from Danio rerio (Zebrafish).